The primary structure comprises 761 residues: Phosphoribosylformylglycinamidine synthase subunit PurL (761 aa).

Positions 1–16 (MTGNPAAPAATSVSPP) are enriched in low complexity. The interval 1–21 (MTGNPAAPAATSVSPPAEQPY) is disordered. Residue His-57 is part of the active site. ATP contacts are provided by Tyr-60 and Lys-101. Mg(2+) is bound at residue Glu-103. Substrate contacts are provided by residues 104–107 (SHNH) and Arg-126. Residue His-105 is the Proton acceptor of the active site. Asp-127 lines the Mg(2+) pocket. A substrate-binding site is contributed by Gln-252. A Mg(2+)-binding site is contributed by Asp-280. Substrate is bound at residue 329-331 (ESQ). Asn-519 and Gly-556 together coordinate ATP. Mg(2+) is bound at residue Asn-557. Ser-559 contributes to the substrate binding site.

Belongs to the FGAMS family. Monomer. Part of the FGAM synthase complex composed of 1 PurL, 1 PurQ and 2 PurS subunits.

The protein resides in the cytoplasm. It catalyses the reaction N(2)-formyl-N(1)-(5-phospho-beta-D-ribosyl)glycinamide + L-glutamine + ATP + H2O = 2-formamido-N(1)-(5-O-phospho-beta-D-ribosyl)acetamidine + L-glutamate + ADP + phosphate + H(+). The protein operates within purine metabolism; IMP biosynthesis via de novo pathway; 5-amino-1-(5-phospho-D-ribosyl)imidazole from N(2)-formyl-N(1)-(5-phospho-D-ribosyl)glycinamide: step 1/2. Part of the phosphoribosylformylglycinamidine synthase complex involved in the purines biosynthetic pathway. Catalyzes the ATP-dependent conversion of formylglycinamide ribonucleotide (FGAR) and glutamine to yield formylglycinamidine ribonucleotide (FGAM) and glutamate. The FGAM synthase complex is composed of three subunits. PurQ produces an ammonia molecule by converting glutamine to glutamate. PurL transfers the ammonia molecule to FGAR to form FGAM in an ATP-dependent manner. PurS interacts with PurQ and PurL and is thought to assist in the transfer of the ammonia molecule from PurQ to PurL. The sequence is that of Phosphoribosylformylglycinamidine synthase subunit PurL from Frankia casuarinae (strain DSM 45818 / CECT 9043 / HFP020203 / CcI3).